Reading from the N-terminus, the 1029-residue chain is Serine/threonine-protein kinase KSP1 (1029 aa).

One can recognise a Protein kinase domain in the interval 18–351; sequence YQKIEDISEG…TELQNLSEYT (334 aa). ATP-binding positions include 27 to 35 and lysine 47; that span reads GSYGYVSLA. Acidic residues predominate over residues 56 to 79; it reads GQYDGPQDDENDCDSSDCDDDEDT. Residues 56-105 are disordered; it reads GQYDGPQDDENDCDSSDCDDDEDTKVDTDRHENENGNASSNNGSSREKKH. The span at 80 to 89 shows a compositional bias: basic and acidic residues; that stretch reads KVDTDRHENE. Residues 90–99 are compositionally biased toward low complexity; that stretch reads NGNASSNNGS. The Proton acceptor role is filled by aspartate 207. Residues 377-397 form a disordered region; it reads VPPSSAPVSLPTPISSSNKQH. 2 positions are modified to phosphoserine: serine 416 and serine 419. Phosphothreonine is present on residues threonine 501, threonine 504, and threonine 526. Serine 529 carries the phosphoserine modification. The segment at 532–570 is disordered; it reads HRYMEGFSNNNNKQYRQNRNYNNNNNNSNNNHGSNYNNF. The span at 538 to 570 shows a compositional bias: low complexity; that stretch reads FSNNNNKQYRQNRNYNNNNNNSNNNHGSNYNNF. Phosphoserine is present on serine 646. Positions 732 to 824 are disordered; sequence STNHNNNGNN…SDSKELEQER (93 aa). The segment covering 734 to 743 has biased composition (low complexity); that stretch reads NHNNNGNNNH. Residues 744-754 show a composition bias toward polar residues; the sequence is IDTNSTTNQYH. Basic and acidic residues predominate over residues 813 to 824; sequence HSSDSKELEQER. Phosphoserine occurs at positions 845 and 884. The disordered stretch occupies residues 949-978; that stretch reads EYEGESDKMAHGKMEGGDNESSSTSPDERQ. Positions 953–964 are enriched in basic and acidic residues; the sequence is ESDKMAHGKMEG. Threonine 1005 is modified (phosphothreonine). Serine 1014 carries the phosphoserine modification.

This sequence belongs to the protein kinase superfamily. Ser/Thr protein kinase family. CK2 subfamily. Phosphorylated by PKA in a TORC1-dependent manner. Phosphorylation at PKA consensus sites RRxS/T decreases upon rapamycin treatment.

The protein resides in the nucleus. The enzyme catalyses L-seryl-[protein] + ATP = O-phospho-L-seryl-[protein] + ADP + H(+). It catalyses the reaction L-threonyl-[protein] + ATP = O-phospho-L-threonyl-[protein] + ADP + H(+). Its function is as follows. May act on PRP20. This Saccharomyces cerevisiae (strain ATCC 204508 / S288c) (Baker's yeast) protein is Serine/threonine-protein kinase KSP1 (KSP1).